The following is a 596-amino-acid chain: Cis-3-hydroxy-L-proline dehydratase (596 aa).

Serine 67 serves as the catalytic Proton acceptor.

Belongs to the AcnX family. As to quaternary structure, monomer. Fe(3+) serves as cofactor.

The catalysed reaction is cis-3-hydroxy-L-proline = 1-pyrroline-2-carboxylate + H2O. Inhibited by Zn(2+). Not inhibited by pyrrole-2-carboxylate nor its derivative 2-thiophenecarboxylate. Functionally, catalyzes the dehydration of cis-3-hydroxy-L-proline (c3LHyp) to Delta(1)-pyrroline-2-carboxylate (Pyr2C). No activity with L-proline, trans-4-hydroxy-L-proline (t4LHyp), cis-4-hydroxy-L-proline (c4LHyp), trans-3-hydroxy-L-proline (t3LHyp), D-proline, cis-4-hydroxy-D-proline (c4DHyp), trans-4-hydroxy-D-proline (t4DHyp) or L-serine as substrates. Because of the low catalytic efficiency, C3LHyp is likely not a main physiological substrate of this enzyme in H.jecorina. The sequence is that of Cis-3-hydroxy-L-proline dehydratase from Hypocrea jecorina (strain QM6a) (Trichoderma reesei).